The chain runs to 94 residues: Venom protein 59.1 (94 aa).

An N-terminal signal peptide occupies residues 1 to 22 (MNSREMFCVFILFASFFYCSYA). Disulfide bonds link cysteine 19/cysteine 47, cysteine 26/cysteine 49, cysteine 32/cysteine 50, cysteine 38/cysteine 53, cysteine 61/cysteine 76, and cysteine 70/cysteine 91. Residues 23–94 (EQECNCDKSC…GEALEICLRA (72 aa)) form the IGFBP N-terminal domain.

As to expression, expressed by the venom gland.

Its subcellular location is the secreted. This Lychas mucronatus (Chinese swimming scorpion) protein is Venom protein 59.1.